The following is a 66-amino-acid chain: MKASELRNYTDEELRNLLEEKKRQLMELRFQLAMGQLKNTSLIKLTKRDIARIKTILRERELGIRR.

Belongs to the universal ribosomal protein uL29 family.

This chain is Large ribosomal subunit protein uL29, found in Thermotoga neapolitana (strain ATCC 49049 / DSM 4359 / NBRC 107923 / NS-E).